Reading from the N-terminus, the 227-residue chain is Cytochrome c oxidase subunit 2 (227 aa).

The Mitochondrial intermembrane portion of the chain corresponds to 1-14; sequence MAYPFQLGFQDASS. The chain crosses the membrane as a helical span at residues 15–45; that stretch reads PIMEELLHFHDHTLMIVFLISSLVLYIISLM. Over 46–59 the chain is Mitochondrial matrix; that stretch reads LTTKLTHTSTMDAQ. A helical membrane pass occupies residues 60–87; the sequence is EVETIWTILPAIILILIALPSLRILYMM. Residues 88 to 227 are Mitochondrial intermembrane-facing; the sequence is DEINNPSLTV…HFENWSLSMI (140 aa). Positions 161, 196, 198, 200, 204, and 207 each coordinate Cu cation. Position 198 (Glu-198) interacts with Mg(2+).

It belongs to the cytochrome c oxidase subunit 2 family. As to quaternary structure, component of the cytochrome c oxidase (complex IV, CIV), a multisubunit enzyme composed of 14 subunits. The complex is composed of a catalytic core of 3 subunits MT-CO1, MT-CO2 and MT-CO3, encoded in the mitochondrial DNA, and 11 supernumerary subunits COX4I, COX5A, COX5B, COX6A, COX6B, COX6C, COX7A, COX7B, COX7C, COX8 and NDUFA4, which are encoded in the nuclear genome. The complex exists as a monomer or a dimer and forms supercomplexes (SCs) in the inner mitochondrial membrane with NADH-ubiquinone oxidoreductase (complex I, CI) and ubiquinol-cytochrome c oxidoreductase (cytochrome b-c1 complex, complex III, CIII), resulting in different assemblies (supercomplex SCI(1)III(2)IV(1) and megacomplex MCI(2)III(2)IV(2)). Found in a complex with TMEM177, COA6, COX18, COX20, SCO1 and SCO2. Interacts with TMEM177 in a COX20-dependent manner. Interacts with COX20. Interacts with COX16. Cu cation serves as cofactor.

It is found in the mitochondrion inner membrane. It catalyses the reaction 4 Fe(II)-[cytochrome c] + O2 + 8 H(+)(in) = 4 Fe(III)-[cytochrome c] + 2 H2O + 4 H(+)(out). Functionally, component of the cytochrome c oxidase, the last enzyme in the mitochondrial electron transport chain which drives oxidative phosphorylation. The respiratory chain contains 3 multisubunit complexes succinate dehydrogenase (complex II, CII), ubiquinol-cytochrome c oxidoreductase (cytochrome b-c1 complex, complex III, CIII) and cytochrome c oxidase (complex IV, CIV), that cooperate to transfer electrons derived from NADH and succinate to molecular oxygen, creating an electrochemical gradient over the inner membrane that drives transmembrane transport and the ATP synthase. Cytochrome c oxidase is the component of the respiratory chain that catalyzes the reduction of oxygen to water. Electrons originating from reduced cytochrome c in the intermembrane space (IMS) are transferred via the dinuclear copper A center (CU(A)) of subunit 2 and heme A of subunit 1 to the active site in subunit 1, a binuclear center (BNC) formed by heme A3 and copper B (CU(B)). The BNC reduces molecular oxygen to 2 water molecules using 4 electrons from cytochrome c in the IMS and 4 protons from the mitochondrial matrix. This chain is Cytochrome c oxidase subunit 2 (MT-CO2), found in Oryctolagus cuniculus (Rabbit).